The primary structure comprises 599 residues: Elongation factor 4 (599 aa).

One can recognise a tr-type G domain in the interval 5-187; the sequence is SHIRNFSIIA…RLVQSIPAPE (183 aa). Residues 17 to 22 and 134 to 137 contribute to the GTP site; these read DHGKST and NKMD.

The protein belongs to the TRAFAC class translation factor GTPase superfamily. Classic translation factor GTPase family. LepA subfamily.

It is found in the cell inner membrane. It carries out the reaction GTP + H2O = GDP + phosphate + H(+). Its function is as follows. Required for accurate and efficient protein synthesis under certain stress conditions. May act as a fidelity factor of the translation reaction, by catalyzing a one-codon backward translocation of tRNAs on improperly translocated ribosomes. Back-translocation proceeds from a post-translocation (POST) complex to a pre-translocation (PRE) complex, thus giving elongation factor G a second chance to translocate the tRNAs correctly. Binds to ribosomes in a GTP-dependent manner. This Pseudomonas entomophila (strain L48) protein is Elongation factor 4.